The sequence spans 298 residues: Tyrosine recombinase XerC (298 aa).

Residues T2–V88 enclose the Core-binding (CB) domain. The region spanning H109 to D288 is the Tyr recombinase domain. Catalysis depends on residues R148, K172, H240, R243, and H266. The active-site O-(3'-phospho-DNA)-tyrosine intermediate is the Y275.

The protein belongs to the 'phage' integrase family. XerC subfamily. Forms a cyclic heterotetrameric complex composed of two molecules of XerC and two molecules of XerD, in which XerC interacts with XerD via its C-terminal region, XerD interacts with XerC via its C-terminal region and so on.

It localises to the cytoplasm. With respect to regulation, ftsK may regulate the catalytic switch between XerC and XerD in the heterotetrameric complex during the two steps of the recombination process. In terms of biological role, site-specific tyrosine recombinase, which acts by catalyzing the cutting and rejoining of the recombining DNA molecules. Binds cooperatively to specific DNA consensus sequences that are separated from XerD binding sites by a short central region, forming the heterotetrameric XerC-XerD complex that recombines DNA substrates. The complex is essential to convert dimers of the bacterial chromosome into monomers to permit their segregation at cell division. It also contributes to the segregational stability of plasmids. In the complex XerC specifically exchanges the top DNA strands. The chain is Tyrosine recombinase XerC from Escherichia coli O157:H7.